A 232-amino-acid polypeptide reads, in one-letter code: Ornithine carbamoyltransferase (232 aa).

Residues glutamine 15, arginine 39, and 66 to 69 (HPTQ) contribute to the carbamoyl phosphate site. L-ornithine-binding positions include asparagine 99, aspartate 163, and 167–168 (SM). Residues 204–207 (HCLP) and threonine 232 each bind carbamoyl phosphate.

Belongs to the aspartate/ornithine carbamoyltransferase superfamily. OTCase family.

It is found in the cytoplasm. The catalysed reaction is carbamoyl phosphate + L-ornithine = L-citrulline + phosphate + H(+). It functions in the pathway amino-acid biosynthesis; L-arginine biosynthesis; L-arginine from L-ornithine and carbamoyl phosphate: step 1/3. Its function is as follows. Reversibly catalyzes the transfer of the carbamoyl group from carbamoyl phosphate (CP) to the N(epsilon) atom of ornithine (ORN) to produce L-citrulline. The protein is Ornithine carbamoyltransferase (argF) of Neisseria pharyngis.